A 283-amino-acid polypeptide reads, in one-letter code: Tryptophan 2,3-dioxygenase (283 aa).

Substrate contacts are provided by residues 52-56 (FIIQH), Tyr114, and Arg118. His241 contributes to the heme binding site. Thr255 contributes to the substrate binding site.

It belongs to the tryptophan 2,3-dioxygenase family. In terms of assembly, homotetramer. The cofactor is heme.

The enzyme catalyses L-tryptophan + O2 = N-formyl-L-kynurenine. It functions in the pathway amino-acid degradation; L-tryptophan degradation via kynurenine pathway; L-kynurenine from L-tryptophan: step 1/2. Functionally, heme-dependent dioxygenase that catalyzes the oxidative cleavage of the L-tryptophan (L-Trp) pyrrole ring and converts L-tryptophan to N-formyl-L-kynurenine. Catalyzes the oxidative cleavage of the indole moiety. The protein is Tryptophan 2,3-dioxygenase of Pseudomonas fluorescens (strain ATCC BAA-477 / NRRL B-23932 / Pf-5).